The following is a 330-amino-acid chain: Glucosyltransferase 3 (330 aa).

T16 is a binding site for UDP. The tract at residues 106–111 (MFSGNF) is substrate protein-binding loop. UDP contacts are provided by residues R179, 211 to 214 (YRPD), and 244 to 249 (SYKLGS).

It belongs to the Gtf3 glucosyltransferase family. As to quaternary structure, homotetramer; a dimer of dimers. In vitro glycosyltransferase activity is metal-independent. is required as a cofactor.

It participates in protein modification; protein glycosylation. Required for polymorphic O-glycosylation of the serine-rich repeat protein Fap1. Catalyzes the second step in glycosylation of the serine-rich repeat protein in this bacteria. Transfers glucose from UDP-glucose to the terminal GlcNAc moiety of 3-O-(N-acetyl-alpha-D-glucosaminyl)-L-seryl-[protein] which results from the first glycosylation step of Fap1; does not use other sugar nucleotides as substrates. This is Glucosyltransferase 3 from Streptococcus parasanguinis.